Reading from the N-terminus, the 336-residue chain is Ventral anterior homeobox 1 (336 aa).

The segment covering 1–34 has biased composition (basic and acidic residues); it reads MFGKTDKMDVRCHSDTEAARVSKNAHKESREIKG. Disordered stretches follow at residues 1-39 and 50-69; these read MFGK…EGSL and AFSA…NSSA. A DNA-binding region (homeobox) is located at residues 100–159; it reads PKRTRTSFTAEQLYRLEMEFQRCQYVVGRERTELARQLNLSETQVKVWFQNRRTKQKKDQ. Over residues 236-250 the composition is skewed to low complexity; that stretch reads PGPAGAASQHPPAVG. Disordered stretches follow at residues 236 to 267 and 316 to 336; these read PGPA…HAGA and SAFE…KALD. Residues 325-336 show a composition bias toward basic and acidic residues; it reads NNKEGAEKKALD.

It belongs to the EMX homeobox family.

The protein localises to the nucleus. Functionally, transcription factor that may function in dorsoventral specification of the forebrain. Required for axon guidance and major tract formation in the developing forebrain. May contribute to the differentiation of the neuroretina, pigmented epithelium and optic stalk. The polypeptide is Ventral anterior homeobox 1 (Vax1) (Rattus norvegicus (Rat)).